The sequence spans 412 residues: Adenosine receptor A2a (412 aa).

Residues Met1–Leu7 are Extracellular-facing. A helical transmembrane segment spans residues Val8 to Trp32. Over Leu33–Asn42 the chain is Cytoplasmic. A helical membrane pass occupies residues Tyr43–Ile66. The Extracellular segment spans residues Ser67–Cys77. Disulfide bonds link Cys71-Cys159, Cys74-Cys146, and Cys77-Cys166. Residues Leu78–Ile100 traverse the membrane as a helical segment. Topologically, residues Asp101–Arg120 are cytoplasmic. A helical membrane pass occupies residues Ala121–Trp143. At Asn144–Pro173 the chain is on the extracellular side. The N-linked (GlcNAc...) asparagine glycan is linked to Asn154. Glu169 serves as a coordination point for adenosine. The chain crosses the membrane as a helical span at residues Met174–Leu198. The Cytoplasmic segment spans residues Arg199–Ser234. The helical transmembrane segment at Leu235–Phe258 threads the bilayer. Position 253 (Asn253) interacts with adenosine. The cysteines at positions 259 and 262 are disulfide-linked. The Extracellular portion of the chain corresponds to Cys259–Pro266. The chain crosses the membrane as a helical span at residues Leu267–Tyr290. Adenosine is bound by residues Ser277 and His278. The Cytoplasmic segment spans residues Arg291–Ser412. Residues Arg368 to Ser412 form a disordered region.

The protein belongs to the G-protein coupled receptor 1 family. As to quaternary structure, interacts (via cytoplasmic C-terminal domain) with USP4; the interaction is direct. May interact with DRD4. Interacts with NECAB2. Interacts (via cytoplasmic C-terminal domain) with GAS2L2; interaction enhances receptor-mediated adenylyl cyclase activity. In terms of processing, ubiquitinated. Deubiquitinated by USP4; leading to stabilization and expression at the cell surface.

It localises to the cell membrane. Functionally, receptor for adenosine. The activity of this receptor is mediated by G proteins which activate adenylyl cyclase. The chain is Adenosine receptor A2a (ADORA2A) from Equus caballus (Horse).